A 130-amino-acid chain; its full sequence is Large ribosomal subunit protein bL17 (130 aa).

The protein belongs to the bacterial ribosomal protein bL17 family. Part of the 50S ribosomal subunit. Contacts protein L32.

This chain is Large ribosomal subunit protein bL17, found in Shewanella loihica (strain ATCC BAA-1088 / PV-4).